The sequence spans 175 residues: NADH-quinone oxidoreductase subunit B (175 aa).

4 residues coordinate [4Fe-4S] cluster: Cys-49, Cys-50, Cys-115, and Cys-145.

Belongs to the complex I 20 kDa subunit family. As to quaternary structure, NDH-1 is composed of 14 different subunits. Subunits NuoB, C, D, E, F, and G constitute the peripheral sector of the complex. Requires [4Fe-4S] cluster as cofactor.

It localises to the cell membrane. The catalysed reaction is a quinone + NADH + 5 H(+)(in) = a quinol + NAD(+) + 4 H(+)(out). In terms of biological role, NDH-1 shuttles electrons from NADH, via FMN and iron-sulfur (Fe-S) centers, to quinones in the respiratory chain. The immediate electron acceptor for the enzyme in this species is believed to be a menaquinone. Couples the redox reaction to proton translocation (for every two electrons transferred, four hydrogen ions are translocated across the cytoplasmic membrane), and thus conserves the redox energy in a proton gradient. This chain is NADH-quinone oxidoreductase subunit B, found in Heliobacterium modesticaldum (strain ATCC 51547 / Ice1).